Reading from the N-terminus, the 247-residue chain is Small ribosomal subunit protein uS2 (247 aa).

The protein belongs to the universal ribosomal protein uS2 family.

This chain is Small ribosomal subunit protein uS2, found in Fusobacterium nucleatum subsp. nucleatum (strain ATCC 25586 / DSM 15643 / BCRC 10681 / CIP 101130 / JCM 8532 / KCTC 2640 / LMG 13131 / VPI 4355).